The chain runs to 686 residues: Eukaryotic translation initiation factor 3 subunit B (686 aa).

A disordered region spans residues 1 to 29 (MAKKHAGADANDSDYNEEPNFEDPPGFVD). Acidic residues predominate over residues 11 to 21 (NDSDYNEEPNF). Residues 53-137 (SVVVVDNIPK…HTFAVNLFTD (85 aa)) form the RRM domain. WD repeat units follow at residues 203 to 242 (TRER…KIQK), 289 to 327 (DGMS…LLDL), 330 to 365 (IKIP…TLME), 438 to 480 (EIRE…KPSL), and 526 to 571 (PDHF…IKRT). Positions 590-642 (AEEKQKEIKKNLKKYYAVFEQKDRLRLTRASKELLEKRAQLRETFMEYRNKRI) form a coiled coil.

The protein belongs to the eIF-3 subunit B family. As to quaternary structure, component of the eukaryotic translation initiation factor 3 (eIF-3) complex. The eIF-3 complex interacts with pix. Interacts with mxt.

The protein localises to the cytoplasm. Its function is as follows. RNA-binding component of the eukaryotic translation initiation factor 3 (eIF-3) complex, which is involved in protein synthesis of a specialized repertoire of mRNAs and, together with other initiation factors, stimulates binding of mRNA and methionyl-tRNAi to the 40S ribosome. The eIF-3 complex specifically targets and initiates translation of a subset of mRNAs involved in cell proliferation. The chain is Eukaryotic translation initiation factor 3 subunit B from Drosophila ananassae (Fruit fly).